Consider the following 748-residue polypeptide: MSSDANSDDPFSKPIVRKRFQATLAQQGIEDDQLPSVRSSDSPDVPDTPDVPVNQLSSPPLSLPETLSEGNAETLQNLSDDSEPEMLSQSSTSSLNRRMEDSAIDPSRGTRKSQSRGFDYDPAGERTTAPVQKKKKDEIDMGGAKFFPKQEKKHVYTHKWTTEEDDEDEKTISSSSNRYSSRPNQPAVSARPRQPVYATTSTYSKPLASGYGSRVRHIKEANELRESGEYDDFKQDLVYILSSLQSSDASMKVKCLSAISLAKKCVSPDFRQFIKSENMTKSIVKALMDSPEDDLFALAASTVLYLLTRDFNSIKIDFPSLRLVSQLLRIEKFEQRPEDKDKVVNMVWEVFNSYIEKQEVGGQKVSFDMRKESLTPSSLIIEALVFICSRSVNDDNLKSELLNLGILQFVVAKIETNVNLIADNADDTYSILILNRCFRILESSSVFHKKNQAFLISHRSNILISSLAKFLQVILDRVHQLAEEEVKKYISCLALMCRLLINISHDNELCCSKLGQIEGFLPNAITTFTYLAPKFGKENSYDINVMMTSLLTNLVERCNANRKVLIAQTVKMVIPGHDVEEVPALEAITRLFVYHESQAQIVDADLDRELAFDEGGCGDEEEEEEGGDESSDEDGVRKDGRLDRNKMDRMDQVDVVHALQQVMNKASAHMEGSVIASYHALLVGFVLQQNEDHLDEVRKHLPGKNFQNMISQLKRLYDFTKATMAKRVESNSGFRAIERVIEYLERLE.

Disordered regions lie at residues 23-199 and 614-644; these read TLAQ…VYAT and EGGC…RLDR. Residues 35–64 show a composition bias toward low complexity; it reads PSVRSSDSPDVPDTPDVPVNQLSSPPLSLP. Polar residues-rich tracts occupy residues 68 to 79 and 87 to 96; these read SEGNAETLQNLS and LSQSSTSSLN. Positions 172–182 are enriched in low complexity; the sequence is ISSSSNRYSSR. Positions 205–723 constitute a WAPL domain; that stretch reads KPLASGYGSR…KRLYDFTKAT (519 aa). Positions 616–633 are enriched in acidic residues; the sequence is GCGDEEEEEEGGDESSDE. Over residues 634 to 644 the composition is skewed to basic and acidic residues; the sequence is DGVRKDGRLDR.

It belongs to the WAPL family.

It localises to the nucleus. Regulator of meiotic chromosome structure and function, playing a role in sister chromatid cohesion, possibly via antagonizing the coh-3/-4 association with axial elements in nuclei during late prophase, cohesin association with chromatin, DNA double strand break repair and polar body positioning following meiotic divisions during oogenesis. Regulates the morphogenesis and temporal assembly of axial elements to control the organization of meiotic chromosomes in pachytene nuclei and is also involved in meiotic chromosomal remodeling in late pachytene nuclei. Required for the removal of the cohesin component scc-1 from mitotic chromosomes. This chain is Wings apart-like protein homolog 1, found in Caenorhabditis elegans.